A 1199-amino-acid polypeptide reads, in one-letter code: RNA-binding protein 20 (1199 aa).

3 disordered regions span residues 1-55, 163-186, and 320-346; these read MVLA…PQAS, PSTA…SLPS, and ERPP…PASQ. Positions 25-42 are enriched in low complexity; sequence VMPGVQGPSVPQGQQGMQ. A compositionally biased stretch (pro residues) spans 43 to 52; sequence PLPPPPPPQP. A compositionally biased stretch (low complexity) spans 170–183; the sequence is SPPSQTGGPGPSVS. The segment at 410–444 adopts a U1-type zinc-finger fold; that stretch reads HLPHICSICDKKVFDLKDWELHVKGKLHAQKCLLF. The RRM domain maps to 520–595; sequence RVVHICNLPE…EKLLIRMSTR (76 aa). A compositionally biased stretch (basic and acidic residues) spans 626-636; that stretch reads EADRYGPERPR. Disordered regions lie at residues 626–685, 720–884, and 944–1077; these read EADR…NGED, REKY…YPTN, and GETL…SQAC. The segment at 630–649 is RS; that stretch reads YGPERPRSRSPMSRSLSPRS. S637, S639, S642, S644, and S651 each carry phosphoserine. Over residues 638-649 the composition is skewed to low complexity; it reads RSPMSRSLSPRS. The span at 667 to 685 shows a compositional bias: basic and acidic residues; it reads YAWRDEDRETVPRRENGED. S728 bears the Phosphoserine mark. Basic and acidic residues-rich tracts occupy residues 739 to 758, 770 to 831, and 859 to 868; these read KGRE…DKYP, RKEE…KESQ, and ENTRTKKGQD. Residue S787 is modified to Phosphoserine. S871, S873, and S955 each carry phosphoserine. Residues 962–971 are compositionally biased toward polar residues; that stretch reads VPSTSASCPN. 9 positions are modified to phosphoserine: S991, S1026, S1038, S1049, S1054, S1058, S1070, S1088, and S1093. Residues 1042 to 1055 show a composition bias toward basic and acidic residues; it reads DDCKARGSPEDGSH. The span at 1067–1077 shows a compositional bias: polar residues; the sequence is PTESDLQSQAC. The Matrin-type zinc-finger motif lies at 1133 to 1164; that stretch reads FYCKLCGLFYTSEEAAKVSHCRSTVHYRNLQK. Residues 1172-1199 form a disordered region; it reads EGLKETEGTDSPSPERGGIGPHLERKKL. Residues S1182 and S1184 each carry the phosphoserine modification.

As to quaternary structure, associates with components of the U1 and U2 U1 small nuclear ribonucleoprotein complexes. In terms of processing, phosphorylation regulates the subcellular localization. Phosphorylation of Ser-637 and Ser-639 in the RS (arginine/serine-rich) region promotes nuclear localization of the protein. In contrast, phosphorylation of the C-terminal disordered region promotes localization to cytoplasmic ribonucleoprotein granules. In terms of tissue distribution, predominantly expressed in striated muscle, with highest expression in the heart. In differentiating myoblasts, expression correlates with sarcomere assembly: expression peaks when alpha-actinin is localized mainly in mature Z bodies within the nascent myofiber and expression declines as the sarcomeres continue to mature. Also expressed in kidney.

Its subcellular location is the nucleus. The protein resides in the cytoplasm. It is found in the cytoplasmic ribonucleoprotein granule. Functionally, RNA-binding protein that acts as a regulator of mRNA splicing of a subset of genes encoding key structural proteins involved in cardiac development, such as TTN (Titin), CACNA1C, CAMK2D or PDLIM5/ENH. Acts as a repressor of mRNA splicing: specifically binds the 5'UCUU-3' motif that is predominantly found within intronic sequences of pre-mRNAs, leading to the exclusion of specific exons in target transcripts. RBM20-mediated exon skipping is hormone-dependent and is essential for TTN isoform transition in both cardiac and skeletal muscles. RBM20-mediated exon skipping of TTN provides substrates for the formation of circular RNA (circRNAs) from the TTN transcripts. Together with RBM24, promotes the expression of short isoforms of PDLIM5/ENH in cardiomyocytes. The polypeptide is RNA-binding protein 20 (Mus musculus (Mouse)).